Here is a 222-residue protein sequence, read N- to C-terminus: ER membrane protein complex subunit 7 homolog (222 aa).

The N-terminal stretch at 1 to 16 is a signal peptide; the sequence is MKSILLLFSLIVLGSA. The Extracellular segment spans residues 17–145; that stretch reads TEEVSRTEQT…RKREEWRITD (129 aa). The chain crosses the membrane as a helical span at residues 146–166; the sequence is MLFSPMVLMLVVPLVVMLILP. Topologically, residues 167-222 are cytoplasmic; sequence KMTANDPELKKEMENMQMPKVDMPDVGEMMANFFGGSAPAKKKAVTGGSGSGQRRK.

This sequence belongs to the EMC7 family.

The protein localises to the membrane. The sequence is that of ER membrane protein complex subunit 7 homolog from Caenorhabditis elegans.